The primary structure comprises 438 residues: Enolase (438 aa).

Gln-174 contributes to the (2R)-2-phosphoglycerate binding site. Residue Glu-216 is the Proton donor of the active site. 3 residues coordinate Mg(2+): Asp-253, Glu-297, and Asp-324. 4 residues coordinate (2R)-2-phosphoglycerate: Lys-349, Arg-378, Ser-379, and Lys-400. The active-site Proton acceptor is Lys-349.

Belongs to the enolase family. In terms of assembly, component of the RNA degradosome, a multiprotein complex involved in RNA processing and mRNA degradation. Mg(2+) is required as a cofactor.

It localises to the cytoplasm. It is found in the secreted. Its subcellular location is the cell surface. The enzyme catalyses (2R)-2-phosphoglycerate = phosphoenolpyruvate + H2O. It participates in carbohydrate degradation; glycolysis; pyruvate from D-glyceraldehyde 3-phosphate: step 4/5. In terms of biological role, catalyzes the reversible conversion of 2-phosphoglycerate (2-PG) into phosphoenolpyruvate (PEP). It is essential for the degradation of carbohydrates via glycolysis. The protein is Enolase of Psychrobacter sp. (strain PRwf-1).